The sequence spans 442 residues: C4-dicarboxylate transport protein (442 aa).

The next 8 membrane-spanning stretches (helical) occupy residues 10 to 30 (VQVL…PSLG), 40 to 60 (FIKL…VSGI), 77 to 97 (LLYF…IVNI), 144 to 164 (FTQG…FALL), 183 to 203 (VIFV…FGAM), 221 to 241 (LMIT…GLIA), 331 to 351 (LLGV…SGFI), and 354 to 374 (AATL…ILGI). The interval 418–442 (LPTIEPDVHSEERGEGRELDSLRPA) is disordered. A compositionally biased stretch (basic and acidic residues) spans 423 to 442 (PDVHSEERGEGRELDSLRPA).

Belongs to the dicarboxylate/amino acid:cation symporter (DAACS) (TC 2.A.23) family.

The protein resides in the cell membrane. Functionally, responsible for the transport of dicarboxylates such as succinate, fumarate, and malate across the membrane. The chain is C4-dicarboxylate transport protein from Deinococcus deserti (strain DSM 17065 / CIP 109153 / LMG 22923 / VCD115).